A 244-amino-acid chain; its full sequence is MKVKTSLSTLILILFLTGCKVDLYTGISQKEGNEMLALLRQEGLSADKEPDKDGKIKLLVEESDVAQAIDILKRKGYPHESFSTLQDVFPKDGLISSPIEELARLNYAKAQEISRTLSEIDGVLVARVHVVLPEEQNNKGKKGVAASASVFIKHAADIQFDTYIPQIKQLVNNSIEGLAYDRISVILVPSVDVRQSSHLPRNTSILSIQVSEESKGRLIGLLSLLILLLPVTNLAQYFWLQRKK.

Positions Met-1–Gly-18 are cleaved as a signal peptide. Cys-19 carries the N-palmitoyl cysteine lipid modification. A lipid anchor (S-diacylglycerol cysteine) is attached at Cys-19. The chain crosses the membrane as a helical span at residues Leu-218 to Phe-238.

This sequence belongs to the YscJ lipoprotein family.

The protein localises to the cell outer membrane. Functionally, required for the export process of the Yop proteins. This chain is Yop proteins translocation lipoprotein J (yscJ), found in Yersinia enterocolitica.